A 2839-amino-acid chain; its full sequence is PDZ domain-containing protein 2 (2839 aa).

The PDZ 1 domain maps to L85 to K182. Residues S185–F318 form a disordered region. Positions G189–T202 are enriched in low complexity. Basic and acidic residues predominate over residues H280–K296. The PDZ 2 domain maps to K334–E419. Polar residues predominate over residues T437–T447. The segment at T437 to L501 is disordered. The segment covering D448 to G461 has biased composition (acidic residues). Residue S568 is modified to Phosphoserine. The region spanning I586–K672 is the PDZ 3 domain. Over residues L678–T697 the composition is skewed to polar residues. The disordered stretch occupies residues L678 to D723. Residues E728–H813 form the PDZ 4 domain. Polar residues-rich tracts occupy residues Y832–G843 and G894–S908. Disordered regions lie at residues Y832–S852 and D879–L921. 2 positions are modified to phosphoserine: S944 and S948. Disordered regions lie at residues S984–P1033, S1062–L1155, K1216–A1493, F1530–Q1620, P1638–S1712, N1809–K1865, G1892–D1976, P2009–M2079, Q2135–K2166, I2178–H2211, H2232–V2251, A2353–G2383, S2426–K2481, and I2516–A2564. The segment covering M1012–R1022 has biased composition (basic and acidic residues). Composition is skewed to polar residues over residues R1092–S1111, S1138–G1147, L1221–I1236, S1250–A1269, T1305–H1315, S1384–D1401, and R1440–E1453. The span at S1662–S1672 shows a compositional bias: low complexity. A compositionally biased stretch (polar residues) spans E1698–L1711. S1850 bears the Phosphoserine mark. Residues S1919–V1931 show a composition bias toward polar residues. Residues H1936–R1945 are compositionally biased toward basic and acidic residues. The span at S2139–S2152 shows a compositional bias: low complexity. The segment covering G2370–G2383 has biased composition (low complexity). Polar residues-rich tracts occupy residues S2426–G2437, R2470–S2480, and P2546–D2559. One can recognise a PDZ 5 domain in the interval F2622–K2706. The disordered stretch occupies residues D2709–S2729. In terms of domain architecture, PDZ 6 spans C2750 to H2835.

In terms of assembly, interacts with SCN10A, CTNND2 and PKP4. In terms of processing, a secreted form is produced by caspase-mediated proteolytic cleavage. Isoform 2 is expressed (at protein level) in prostate and many prostate tumors.

The protein resides in the nucleus. It localises to the cytoplasm. It is found in the endoplasmic reticulum. The protein localises to the secreted. The chain is PDZ domain-containing protein 2 (PDZD2) from Homo sapiens (Human).